Here is a 90-residue protein sequence, read N- to C-terminus: UPF0213 protein lmo0166 (90 aa).

Residues 5–80 (SEHFFYVLKC…KKLSRKNKDA (76 aa)) enclose the GIY-YIG domain.

Belongs to the UPF0213 family.

The sequence is that of UPF0213 protein lmo0166 from Listeria monocytogenes serovar 1/2a (strain ATCC BAA-679 / EGD-e).